The sequence spans 264 residues: N-carbamoylsarcosine amidase (264 aa).

Cys177 serves as the catalytic Nucleophile. The interval 240-264 (TVPKTLSDPQPEVEAPADPVFAEQH) is disordered.

In terms of assembly, homotetramer. It depends on sulfate as a cofactor.

It carries out the reaction N-carbamoylsarcosine + H2O + 2 H(+) = sarcosine + NH4(+) + CO2. The protein operates within amine and polyamine degradation; creatinine degradation; sarcosine from creatinine: step 3/3. The chain is N-carbamoylsarcosine amidase from Arthrobacter sp.